Here is a 109-residue protein sequence, read N- to C-terminus: Cytochrome bo(3) ubiquinol oxidase subunit 4 (109 aa).

At 1-17 (MSHSTDHSGASHGSVKT) the chain is on the cytoplasmic side. A helical membrane pass occupies residues 18–36 (YMTGFILSIILTVIPFWMV). At 37–45 (MTGAASPAV) the chain is on the periplasmic side. Residues 46–64 (ILGTILAMAVVQVLVHLVC) traverse the membrane as a helical segment. The Cytoplasmic portion of the chain corresponds to 65 to 80 (FLHMNTKSDEGWNMTA). Residues 81 to 99 (FVFTVLIIAILVVGSIWIM) traverse the membrane as a helical segment. Residues 100–109 (WNLNYNMMMH) are Periplasmic-facing.

Belongs to the cytochrome c oxidase bacterial subunit 4 family. As to quaternary structure, heterooctamer of two A chains, two B chains, two C chains and two D chains.

The protein resides in the cell inner membrane. In terms of biological role, cytochrome bo(3) ubiquinol terminal oxidase is the component of the aerobic respiratory chain of E.coli that predominates when cells are grown at high aeration. Has proton pump activity across the membrane in addition to electron transfer, pumping 2 protons/electron. This is Cytochrome bo(3) ubiquinol oxidase subunit 4 (cyoD) from Escherichia coli O157:H7.